The sequence spans 225 residues: Methylthioribulose-1-phosphate dehydratase (225 aa).

Residues His106 and His108 each contribute to the Zn(2+) site.

Belongs to the aldolase class II family. MtnB subfamily. Zn(2+) is required as a cofactor.

It catalyses the reaction 5-(methylsulfanyl)-D-ribulose 1-phosphate = 5-methylsulfanyl-2,3-dioxopentyl phosphate + H2O. Its pathway is amino-acid biosynthesis; L-methionine biosynthesis via salvage pathway; L-methionine from S-methyl-5-thio-alpha-D-ribose 1-phosphate: step 2/6. Functionally, catalyzes the dehydration of methylthioribulose-1-phosphate (MTRu-1-P) into 2,3-diketo-5-methylthiopentyl-1-phosphate (DK-MTP-1-P). This chain is Methylthioribulose-1-phosphate dehydratase, found in Xanthomonas oryzae pv. oryzae (strain PXO99A).